We begin with the raw amino-acid sequence, 838 residues long: Periostin (838 aa).

A signal peptide spans 1–23; that stretch reads MVPLLPLYALLLLFLCDINPANA. Residues 42–96 form the EMI domain; it reads GPNVCALQQILGTKKKYFSSCKNWYQGAICGKKTTVLYECCPGYMRMEGMKGCPA. Intrachain disulfides connect Cys-46–Cys-82, Cys-71–Cys-335, Cys-81–Cys-94, Cys-210–Cys-313, and Cys-469–Cys-474. At Cys-62 the chain carries S-cysteinyl cysteine. FAS1 domains are found at residues 99 to 232, 236 to 367, 370 to 494, and 498 to 630; these read PIDH…DRVL, GTSI…DEVL, DSAK…REII, and EKSL…DKLL. A glycan (N-linked (GlcNAc...) asparagine) is linked at Asn-601. The interval 811–838 is disordered; that stretch reads QGDTPAKKIPANKRVQGPRRRSREGRSQ. Residues 826 to 838 are compositionally biased toward basic residues; that stretch reads QGPRRRSREGRSQ.

In terms of assembly, homodimer. Interacts with BMP1 and fibronectin. Gamma-carboxylation is controversial. Gamma-carboxyglutamated; gamma-carboxyglutamate residues are formed by vitamin K dependent carboxylation; these residues may be required for binding to calcium. According to a more recent report in human, does not contain vitamin K-dependent gamma-carboxyglutamate residues. As to expression, preferentially expressed in periosteum and periodontal ligament. Also expressed in the developing and adult heart.

It localises to the golgi apparatus. The protein localises to the secreted. It is found in the extracellular space. Its subcellular location is the extracellular matrix. Induces cell attachment and spreading and plays a role in cell adhesion. Enhances incorporation of BMP1 in the fibronectin matrix of connective tissues, and subsequent proteolytic activation of lysyl oxidase LOX. The polypeptide is Periostin (Postn) (Mus musculus (Mouse)).